Here is a 667-residue protein sequence, read N- to C-terminus: E3 ubiquitin-protein ligase Midline-1 (667 aa).

The RING-type zinc finger occupies 10-60 (CPICLELLEDPLLLPCAHSLCFNCAHRILVSHCATNEPVESINAFQCPTCR). S92 and S96 each carry phosphoserine. B box-type zinc fingers lie at residues 116–165 (KVLC…IEPI) and 172–212 (GLMC…VAAL). Residues C119, C122, C134, C137, C142, C145, H150, H159, C175, H178, C198, and H204 each coordinate Zn(2+). Positions 205 to 264 (RDHQVAALSERYDKLKQNLESNLTNLIKRNTELETLLAKLIQTCQHVEVNASRQEAKLTE) form a coiled coil. In terms of domain architecture, COS spans 320–379 (LKENDHARFLQTAKNITERVSMATASSQVLIPEINLNDTFDTFALDFSREKKLLECLDYL). Residues 381 to 484 (APNPPTIREE…EPGKLKTNSQ (104 aa)) enclose the Fibronectin type-III domain. Residues 471–485 (SRSSEPGKLKTNSQP) show a composition bias toward polar residues. The tract at residues 471–524 (SRSSEPGKLKTNSQPFKLDPKSAHRKLKVSHDNLTVERDESSSKKSHTPERFTS) is disordered. The region spanning 482-659 (NSQPFKLDPK…IITGLPIPDH (178 aa)) is the B30.2/SPRY domain. The segment covering 499-520 (VSHDNLTVERDESSSKKSHTPE) has biased composition (basic and acidic residues). The residue at position 511 (S511) is a Phosphoserine.

The protein belongs to the TRIM/RBCC family. As to quaternary structure, homodimer or heterodimer with MID2. Interacts with IGBP1.

It is found in the cytoplasm. The protein localises to the cytoskeleton. The enzyme catalyses S-ubiquitinyl-[E2 ubiquitin-conjugating enzyme]-L-cysteine + [acceptor protein]-L-lysine = [E2 ubiquitin-conjugating enzyme]-L-cysteine + N(6)-ubiquitinyl-[acceptor protein]-L-lysine.. Has E3 ubiquitin ligase activity towards IGBP1, promoting its monoubiquitination, which results in deprotection of the catalytic subunit of protein phosphatase PP2A, and its subsequent degradation by polyubiquitination. This chain is E3 ubiquitin-protein ligase Midline-1 (Mid1), found in Mus spretus (Western Mediterranean mouse).